The primary structure comprises 183 residues: Large ribosomal subunit protein uL13m (183 aa).

The protein belongs to the universal ribosomal protein uL13 family. As to quaternary structure, component of the mitochondrial large ribosomal subunit (mt-LSU). Mature N.crassa 74S mitochondrial ribosomes consist of a small (37S) and a large (54S) subunit. The 37S small subunit contains a 16S ribosomal RNA (16S mt-rRNA) and 32 different proteins. The 54S large subunit contains a 23S rRNA (23S mt-rRNA) and 42 different proteins.

Its subcellular location is the mitochondrion. Component of the mitochondrial ribosome (mitoribosome), a dedicated translation machinery responsible for the synthesis of mitochondrial genome-encoded proteins, including at least some of the essential transmembrane subunits of the mitochondrial respiratory chain. The mitoribosomes are attached to the mitochondrial inner membrane and translation products are cotranslationally integrated into the membrane. The polypeptide is Large ribosomal subunit protein uL13m (mrpl23) (Neurospora crassa (strain ATCC 24698 / 74-OR23-1A / CBS 708.71 / DSM 1257 / FGSC 987)).